Consider the following 471-residue polypeptide: Probable lysophospholipase BODYGUARD 2 (471 aa).

An N-terminal signal peptide occupies residues 1-45 (MGIARWLNRTVGFFVFALLDIADFLLCYTYKTLDYFLESERKPCY). Cys-46 is lipidated: N-palmitoyl cysteine. The 104-residue stretch at 193-296 (VVFIHGFVSS…AIKSLTLLAP (104 aa)) folds into the AB hydrolase-1 domain. His-197 is an active-site residue. Ser-271 acts as the Nucleophile in catalysis. Residues Asp-418 and His-446 each act as charge relay system in the active site.

It localises to the cell membrane. Its subcellular location is the secreted. It is found in the cell wall. Functionally, involved in cuticle development and morphogenesis. This chain is Probable lysophospholipase BODYGUARD 2, found in Arabidopsis thaliana (Mouse-ear cress).